A 364-amino-acid chain; its full sequence is 3-isopropylmalate dehydrogenase (364 aa).

An NAD(+)-binding site is contributed by 79 to 90; sequence GPKWGTGSVRPE. Positions 97, 107, 136, and 225 each coordinate substrate. 3 residues coordinate Mg(2+): D225, D250, and D254. 289–300 is a binding site for NAD(+); the sequence is GSAPDLPKNKVN.

The protein belongs to the isocitrate and isopropylmalate dehydrogenases family. In terms of assembly, homodimer. The cofactor is Mg(2+). It depends on Mn(2+) as a cofactor.

Its subcellular location is the cytoplasm. The catalysed reaction is (2R,3S)-3-isopropylmalate + NAD(+) = 4-methyl-2-oxopentanoate + CO2 + NADH. The protein operates within amino-acid biosynthesis; L-leucine biosynthesis; L-leucine from 3-methyl-2-oxobutanoate: step 3/4. In terms of biological role, catalyzes the oxidation of 3-carboxy-2-hydroxy-4-methylpentanoate (3-isopropylmalate) to 3-carboxy-4-methyl-2-oxopentanoate. The product decarboxylates to 4-methyl-2 oxopentanoate. In Saccharomyces cerevisiae (strain ATCC 204508 / S288c) (Baker's yeast), this protein is 3-isopropylmalate dehydrogenase (LEU2).